Consider the following 33-residue polypeptide: Neurotoxin Nk-3FTx (33 aa).

Cystine bridges form between Cys-3/Cys-24 and Cys-6/Cys-11.

Expressed by the venom gland.

It localises to the secreted. In terms of biological role, possible voltage-gated potassium channel (Kv) blocker. Decreases amplitude of compound action potential and conduction velocity in toad sciatic nerve. Has only mild anticoagulant activity even at a concentration of 5ug/ml. Shows no cytotoxicity towards human cell lines. The chain is Neurotoxin Nk-3FTx from Naja kaouthia (Monocled cobra).